A 248-amino-acid polypeptide reads, in one-letter code: MHQTNFGFNKVDYTKKQWLVNNIFSRVADKYDLMNDLMSIGLHRLWKNEFIMQIPNLNSNILDVASGSGDIALQLAKKAKARGNNISLILSDINEEMLNNAKKKSIDLNLFQNMKFIVANAEELPFLDNSFDYYTIAFGIRNVPDINKALKEAYRVLKPMGKFICLEFSKVKEGILKDFYKFYSFTIIPSIGQIIARNKEAYEYLVESIALFPSQDDFRIMIKASGFEEVHYKNLSGGIVAIHSAYKI.

S-adenosyl-L-methionine-binding positions include Ser-68, Asp-92, and 120–121; that span reads NA.

Belongs to the class I-like SAM-binding methyltransferase superfamily. MenG/UbiE family.

It carries out the reaction a 2-demethylmenaquinol + S-adenosyl-L-methionine = a menaquinol + S-adenosyl-L-homocysteine + H(+). The catalysed reaction is a 2-methoxy-6-(all-trans-polyprenyl)benzene-1,4-diol + S-adenosyl-L-methionine = a 5-methoxy-2-methyl-3-(all-trans-polyprenyl)benzene-1,4-diol + S-adenosyl-L-homocysteine + H(+). It functions in the pathway quinol/quinone metabolism; menaquinone biosynthesis; menaquinol from 1,4-dihydroxy-2-naphthoate: step 2/2. It participates in cofactor biosynthesis; ubiquinone biosynthesis. Its function is as follows. Methyltransferase required for the conversion of demethylmenaquinol (DMKH2) to menaquinol (MKH2) and the conversion of 2-polyprenyl-6-methoxy-1,4-benzoquinol (DDMQH2) to 2-polyprenyl-3-methyl-6-methoxy-1,4-benzoquinol (DMQH2). The chain is Ubiquinone/menaquinone biosynthesis C-methyltransferase UbiE from Rickettsia typhi (strain ATCC VR-144 / Wilmington).